The chain runs to 86 residues: Cytochrome c oxidase subunit 6B1 (86 aa).

The residue at position 2 (A2) is an N-acetylalanine. One can recognise a CHCH domain in the interval 27–73; the sequence is TRNCWQNYLDFHRCEKAMTAKGGDVSVCEWYRRVYKSLCPISWVSTW. The Cx9C motif signature appears at 30–40; that stretch reads CWQNYLDFHRC. Intrachain disulfides connect C30-C65 and C40-C54. The short motif at 54–65 is the Cx10C motif element; the sequence is CEWYRRVYKSLC. Position 62 is an N6-acetyllysine (K62).

Belongs to the cytochrome c oxidase subunit 6B family. In terms of assembly, component of the cytochrome c oxidase (complex IV, CIV), a multisubunit enzyme composed of 14 subunits. The complex is composed of a catalytic core of 3 subunits MT-CO1, MT-CO2 and MT-CO3, encoded in the mitochondrial DNA, and 11 supernumerary subunits COX4I, COX5A, COX5B, COX6A, COX6B, COX6C, COX7A, COX7B, COX7C, COX8 and NDUFA4, which are encoded in the nuclear genome. The complex exists as a monomer or a dimer and forms supercomplexes (SCs) in the inner mitochondrial membrane with NADH-ubiquinone oxidoreductase (complex I, CI) and ubiquinol-cytochrome c oxidoreductase (cytochrome b-c1 complex, complex III, CIII), resulting in different assemblies (supercomplex SCI(1)III(2)IV(1) and megacomplex MCI(2)III(2)IV(2)).

Its subcellular location is the mitochondrion inner membrane. The protein operates within energy metabolism; oxidative phosphorylation. Its function is as follows. Component of the cytochrome c oxidase, the last enzyme in the mitochondrial electron transport chain which drives oxidative phosphorylation. The respiratory chain contains 3 multisubunit complexes succinate dehydrogenase (complex II, CII), ubiquinol-cytochrome c oxidoreductase (cytochrome b-c1 complex, complex III, CIII) and cytochrome c oxidase (complex IV, CIV), that cooperate to transfer electrons derived from NADH and succinate to molecular oxygen, creating an electrochemical gradient over the inner membrane that drives transmembrane transport and the ATP synthase. Cytochrome c oxidase is the component of the respiratory chain that catalyzes the reduction of oxygen to water. Electrons originating from reduced cytochrome c in the intermembrane space (IMS) are transferred via the dinuclear copper A center (CU(A)) of subunit 2 and heme A of subunit 1 to the active site in subunit 1, a binuclear center (BNC) formed by heme A3 and copper B (CU(B)). The BNC reduces molecular oxygen to 2 water molecules using 4 electrons from cytochrome c in the IMS and 4 protons from the mitochondrial matrix. The chain is Cytochrome c oxidase subunit 6B1 (COX6B1) from Carlito syrichta (Philippine tarsier).